A 276-amino-acid chain; its full sequence is Undecaprenyl-diphosphatase (276 aa).

Transmembrane regions (helical) follow at residues 43–63 (RAMA…VWEF), 85–105 (LNLL…ADTI), 109–129 (LFNA…MLWA), 183–203 (AATE…AVYS), 218–238 (VFAI…RGLL), and 254–274 (IAFG…WASA).

It belongs to the UppP family.

The protein localises to the cell inner membrane. It catalyses the reaction di-trans,octa-cis-undecaprenyl diphosphate + H2O = di-trans,octa-cis-undecaprenyl phosphate + phosphate + H(+). Catalyzes the dephosphorylation of undecaprenyl diphosphate (UPP). Confers resistance to bacitracin. This Pseudomonas syringae pv. syringae (strain B728a) protein is Undecaprenyl-diphosphatase.